The following is a 367-amino-acid chain: tRNA-specific 2-thiouridylase MnmA (367 aa).

ATP-binding positions include 11 to 18 (GLSGGVDS) and M37. Positions 109-111 (NPD) are interaction with target base in tRNA. The active-site Nucleophile is the C114. Residues C114 and C211 are joined by a disulfide bond. G139 serves as a coordination point for ATP. Residues 161 to 163 (KDQ) form an interaction with tRNA region. C211 serves as the catalytic Cysteine persulfide intermediate.

It belongs to the MnmA/TRMU family.

It is found in the cytoplasm. It catalyses the reaction S-sulfanyl-L-cysteinyl-[protein] + uridine(34) in tRNA + AH2 + ATP = 2-thiouridine(34) in tRNA + L-cysteinyl-[protein] + A + AMP + diphosphate + H(+). Catalyzes the 2-thiolation of uridine at the wobble position (U34) of tRNA, leading to the formation of s(2)U34. This is tRNA-specific 2-thiouridylase MnmA from Mycoplasma genitalium (strain ATCC 33530 / DSM 19775 / NCTC 10195 / G37) (Mycoplasmoides genitalium).